The sequence spans 100 residues: Small ribosomal subunit protein uS14 (100 aa).

The protein belongs to the universal ribosomal protein uS14 family. Part of the 30S ribosomal subunit. Contacts proteins S3 and S10.

Its function is as follows. Binds 16S rRNA, required for the assembly of 30S particles and may also be responsible for determining the conformation of the 16S rRNA at the A site. The sequence is that of Small ribosomal subunit protein uS14 from Nostoc sp. (strain PCC 7120 / SAG 25.82 / UTEX 2576).